A 122-amino-acid polypeptide reads, in one-letter code: UPF0231 protein VV1_1657 (122 aa).

Belongs to the UPF0231 family.

The polypeptide is UPF0231 protein VV1_1657 (Vibrio vulnificus (strain CMCP6)).